Consider the following 201-residue polypeptide: IMP cyclohydrolase (201 aa).

Belongs to the archaeal IMP cyclohydrolase family.

The catalysed reaction is IMP + H2O = 5-formamido-1-(5-phospho-D-ribosyl)imidazole-4-carboxamide. The protein operates within purine metabolism; IMP biosynthesis via de novo pathway; IMP from 5-formamido-1-(5-phospho-D-ribosyl)imidazole-4-carboxamide: step 1/1. In terms of biological role, catalyzes the cyclization of 5-formylamidoimidazole-4-carboxamide ribonucleotide to IMP. This chain is IMP cyclohydrolase, found in Methanococcus maripaludis (strain C6 / ATCC BAA-1332).